A 449-amino-acid polypeptide reads, in one-letter code: Exodeoxyribonuclease 7 large subunit (449 aa).

It belongs to the XseA family. As to quaternary structure, heterooligomer composed of large and small subunits.

The protein resides in the cytoplasm. It carries out the reaction Exonucleolytic cleavage in either 5'- to 3'- or 3'- to 5'-direction to yield nucleoside 5'-phosphates.. Bidirectionally degrades single-stranded DNA into large acid-insoluble oligonucleotides, which are then degraded further into small acid-soluble oligonucleotides. This is Exodeoxyribonuclease 7 large subunit from Lacticaseibacillus paracasei (strain ATCC 334 / BCRC 17002 / CCUG 31169 / CIP 107868 / KCTC 3260 / NRRL B-441) (Lactobacillus paracasei).